A 204-amino-acid chain; its full sequence is Small ribosomal subunit protein uS4 (204 aa).

The segment at 20 to 46 (WGRPKSPINKREYGPGEHGQRRRKPSD) is disordered. Basic and acidic residues predominate over residues 28–38 (NKREYGPGEHG). Residues 93–156 (TRLDAVVYRM…RQMPLILEAL (64 aa)) form the S4 RNA-binding domain.

Belongs to the universal ribosomal protein uS4 family. In terms of assembly, part of the 30S ribosomal subunit. Contacts protein S5. The interaction surface between S4 and S5 is involved in control of translational fidelity.

In terms of biological role, one of the primary rRNA binding proteins, it binds directly to 16S rRNA where it nucleates assembly of the body of the 30S subunit. With S5 and S12 plays an important role in translational accuracy. The polypeptide is Small ribosomal subunit protein uS4 (Rhodospirillum rubrum (strain ATCC 11170 / ATH 1.1.1 / DSM 467 / LMG 4362 / NCIMB 8255 / S1)).